A 211-amino-acid chain; its full sequence is Endo-1,4-beta-xylanase A (211 aa).

The N-terminal stretch at 1-27 (MKVTAAFAGLLVTAFAAPVPEPVLVSR) is a signal peptide. Residues 28-210 (SAGINYVQNY…GAGSASVTIS (183 aa)) form the GH11 domain. Glu106 acts as the Nucleophile in catalysis. Cys119 and Cys138 are disulfide-bonded. The active-site Proton donor is the Glu197.

Belongs to the glycosyl hydrolase 11 (cellulase G) family.

It localises to the secreted. It catalyses the reaction Endohydrolysis of (1-&gt;4)-beta-D-xylosidic linkages in xylans.. It functions in the pathway glycan degradation; xylan degradation. In terms of biological role, endo-1,4-beta-xylanase involved in the hydrolysis of xylan, a major structural heterogeneous polysaccharide found in plant biomass representing the second most abundant polysaccharide in the biosphere, after cellulose. The sequence is that of Endo-1,4-beta-xylanase A (xynA) from Aspergillus niger.